We begin with the raw amino-acid sequence, 395 residues long: S-adenosylmethionine synthase 5 (395 aa).

Glutamate 10 is a binding site for Mg(2+). Histidine 16 is an ATP binding site. Residue glutamate 44 coordinates K(+). Residues glutamate 57 and glutamine 100 each contribute to the L-methionine site. Residues 168–170 (DGK), 236–239 (SGRF), aspartate 247, 253–254 (RK), alanine 270, lysine 274, and lysine 278 each bind ATP. Aspartate 247 lines the L-methionine pocket. An L-methionine-binding site is contributed by lysine 278.

It belongs to the AdoMet synthase family. As to quaternary structure, homotetramer. Requires Mn(2+) as cofactor. Mg(2+) is required as a cofactor. It depends on Co(2+) as a cofactor. The cofactor is K(+).

It localises to the cytoplasm. The catalysed reaction is L-methionine + ATP + H2O = S-adenosyl-L-methionine + phosphate + diphosphate. Its pathway is amino-acid biosynthesis; S-adenosyl-L-methionine biosynthesis; S-adenosyl-L-methionine from L-methionine: step 1/1. Catalyzes the formation of S-adenosylmethionine from methionine and ATP. The reaction comprises two steps that are both catalyzed by the same enzyme: formation of S-adenosylmethionine (AdoMet) and triphosphate, and subsequent hydrolysis of the triphosphate. This is S-adenosylmethionine synthase 5 (METK5) from Populus trichocarpa (Western balsam poplar).